Consider the following 329-residue polypeptide: Malate dehydrogenase (329 aa).

Position 12–18 (12–18 (GAAGQIG)) interacts with NAD(+). Residues Arg95 and Arg101 each contribute to the substrate site. NAD(+)-binding positions include Asn108, Gln115, and 132-134 (VGN). Residues Asn134 and Arg165 each contribute to the substrate site. His190 (proton acceptor) is an active-site residue.

It belongs to the LDH/MDH superfamily. MDH type 2 family.

It catalyses the reaction (S)-malate + NAD(+) = oxaloacetate + NADH + H(+). Functionally, catalyzes the reversible oxidation of malate to oxaloacetate. The protein is Malate dehydrogenase of Bordetella avium (strain 197N).